We begin with the raw amino-acid sequence, 349 residues long: Fructose-bisphosphate aldolase 2, chloroplastic (349 aa).

Positions 47 and 137 each coordinate substrate. Glutamate 177 acts as the Proton acceptor in catalysis. Residue lysine 219 is the Schiff-base intermediate with dihydroxyacetone-P of the active site.

The protein belongs to the class I fructose-bisphosphate aldolase family.

It localises to the plastid. The protein resides in the chloroplast. It carries out the reaction beta-D-fructose 1,6-bisphosphate = D-glyceraldehyde 3-phosphate + dihydroxyacetone phosphate. The protein operates within carbohydrate degradation; glycolysis; D-glyceraldehyde 3-phosphate and glycerone phosphate from D-glucose: step 4/4. The protein is Fructose-bisphosphate aldolase 2, chloroplastic of Pisum sativum (Garden pea).